The primary structure comprises 354 residues: Probable cinnamyl alcohol dehydrogenase 5 (354 aa).

Position 43 (Cys-43) interacts with Zn(2+). Ser-45 is a binding site for NADP(+). His-65, Glu-66, Cys-96, Cys-99, Cys-102, Cys-110, and Cys-159 together coordinate Zn(2+). Residues Thr-163, 184-189, 207-212, Thr-247, Gly-271, and 294-296 contribute to the NADP(+) site; these read GLGGLG, SSSPGK, and SCI.

The protein belongs to the zinc-containing alcohol dehydrogenase family. In terms of assembly, homodimer. The cofactor is Zn(2+).

The enzyme catalyses (E)-cinnamyl alcohol + NADP(+) = (E)-cinnamaldehyde + NADPH + H(+). It carries out the reaction (E)-coniferol + NADP(+) = (E)-coniferaldehyde + NADPH + H(+). It catalyses the reaction (E)-sinapyl alcohol + NADP(+) = (E)-sinapaldehyde + NADPH + H(+). The catalysed reaction is (E)-4-coumaroyl alcohol + NADP(+) = (E)-4-coumaraldehyde + NADPH + H(+). The enzyme catalyses (E)-caffeyl alcohol + NADP(+) = (E)-caffeyl aldehyde + NADPH + H(+). It participates in aromatic compound metabolism; phenylpropanoid biosynthesis. In terms of biological role, involved in lignin biosynthesis. Catalyzes the final step specific for the production of lignin monomers. Catalyzes the NADPH-dependent reduction of coniferaldehyde, 5-hydroxyconiferaldehyde, sinapaldehyde, 4-coumaraldehyde and caffeyl aldehyde to their respective alcohols. This Oryza sativa subsp. japonica (Rice) protein is Probable cinnamyl alcohol dehydrogenase 5.